We begin with the raw amino-acid sequence, 547 residues long: Calcium-dependent protein kinase 16 (547 aa).

A disordered region spans residues 1-53; sequence MGNCCRSPAAAAREDVKTSHFPASTGGGKKKPHQARNGGGGGGGGGGGGWEKK. Gly-2 carries N-myristoyl glycine lipidation. Over residues 37 to 49 the composition is skewed to gly residues; sequence NGGGGGGGGGGGG. Residues 73-331 enclose the Protein kinase domain; the sequence is YALDRELGRG…AKQVLEHTWL (259 aa). ATP contacts are provided by residues 79 to 87 and Lys-102; that span reads LGRGEFGVT. Catalysis depends on Asp-197, which acts as the Proton acceptor. The interval 337-367 is autoinhibitory domain; the sequence is APNVPLGDIVKSRLKQFSRMNRFKRRALRVI. EF-hand domains follow at residues 374–409, 410–445, 446–481, and 482–517; these read EEVE…FGSH, LAES…LQRM, ANGE…DGAT, and DIME…GTDW. Residues Asp-387, Asp-389, Asp-391, Glu-398, Asp-423, Asn-425, Glu-434, Asp-459, Asp-461, Asn-463, Tyr-465, Glu-470, Asp-495, Asp-497, Asp-499, Lys-501, and Glu-506 each contribute to the Ca(2+) site.

The protein belongs to the protein kinase superfamily. Ser/Thr protein kinase family. CDPK subfamily.

The protein resides in the membrane. The catalysed reaction is L-seryl-[protein] + ATP = O-phospho-L-seryl-[protein] + ADP + H(+). It catalyses the reaction L-threonyl-[protein] + ATP = O-phospho-L-threonyl-[protein] + ADP + H(+). Activated by calcium. Autophosphorylation may play an important role in the regulation of the kinase activity. Functionally, may play a role in signal transduction pathways that involve calcium as a second messenger. In Oryza sativa subsp. japonica (Rice), this protein is Calcium-dependent protein kinase 16.